A 337-amino-acid chain; its full sequence is Phenylalanine--tRNA ligase alpha subunit (337 aa).

Glu252 is a Mg(2+) binding site.

Belongs to the class-II aminoacyl-tRNA synthetase family. Phe-tRNA synthetase alpha subunit type 1 subfamily. As to quaternary structure, tetramer of two alpha and two beta subunits. Requires Mg(2+) as cofactor.

The protein localises to the cytoplasm. It carries out the reaction tRNA(Phe) + L-phenylalanine + ATP = L-phenylalanyl-tRNA(Phe) + AMP + diphosphate + H(+). The protein is Phenylalanine--tRNA ligase alpha subunit of Francisella tularensis subsp. holarctica (strain OSU18).